Here is a 205-residue protein sequence, read N- to C-terminus: Probable GTP-binding protein EngB (205 aa).

The region spanning 22 to 194 (ELPEIAFAGR…WESILDLCEI (173 aa)) is the EngB-type G domain. Residues 30–37 (GRSNVGKS), 57–61 (GRTQL), 75–78 (DLPG), 142–145 (TKAD), and 173–175 (FSA) each bind GTP. Mg(2+) is bound by residues Ser37 and Thr59.

The protein belongs to the TRAFAC class TrmE-Era-EngA-EngB-Septin-like GTPase superfamily. EngB GTPase family. The cofactor is Mg(2+).

In terms of biological role, necessary for normal cell division and for the maintenance of normal septation. In Desulfatibacillum aliphaticivorans, this protein is Probable GTP-binding protein EngB.